A 332-amino-acid polypeptide reads, in one-letter code: MSMHINNVITHLLYKNESEELQLGLRSEPIDSKSPNGEALVVALHRFYGDKPKGFAEFNYQSDFQEQLEKFRLKEINFYEFSSWTVTRLKDELSKYPFADTGVLALVEYSHLATEYLIIALLPIENSIRLDDGLDINITDHVEFSKITIAARINITDFETKANDKYITYIKGRVGRAVSDFFLDCLSACVTLNTKQQNTVLLQAVEDFCSDSKLERDEKESCKKRIFEYCRDQKKNGEDVQLQELSHELPRNNEGHTFFDYTQEQGYELQESFPVDTATVRKLTKYVGAGGGINISFDSILLGERIFYDVETDTLTLKGIPPNLRYQLQSRR.

Belongs to the YejK family.

It localises to the cytoplasm. It is found in the nucleoid. The chain is Nucleoid-associated protein VVA0877 from Vibrio vulnificus (strain YJ016).